Reading from the N-terminus, the 472-residue chain is Spliceosome-associated protein CWC27 homolog (472 aa).

An N-acetylserine modification is found at Ser-2. In terms of domain architecture, PPIase cyclophilin-type spans 11-166; it reads TNGKVLLKTT…NPHKIKSCEV (156 aa). 2 N-linked (GlcNAc...) asparagine glycosylation sites follow: Asn-109 and Asn-201. The stretch at 206-230 forms a coiled coil; that stretch reads SFGEEAEEEEEEVNRVSQSMKGKSK. Disordered regions lie at residues 206–386 and 398–472; these read SFGE…DQTL and QAIA…KERR. The segment covering 231–241 has biased composition (basic and acidic residues); the sequence is SSHDLLKDDPH. Positions 257–268 are enriched in acidic residues; that stretch reads DLVDDGEDESAE. Basic and acidic residues-rich tracts occupy residues 269-286, 304-347, and 359-371; these read HDEY…ERIA, EVEK…KRSE, and EYRR…EALR. The stretch at 306-377 forms a coiled coil; that stretch reads EKKSVSRSEE…EALRKQQSKK (72 aa). Ser-346 bears the Phosphoserine mark. Over residues 404–418 the composition is skewed to acidic residues; it reads PENDIPETEVEDDEG. 2 stretches are compositionally biased toward basic and acidic residues: residues 425–437 and 457–472; these read QFED…KDAS and RREE…KERR.

This sequence belongs to the cyclophilin-type PPIase family. As to quaternary structure, part of the activated spliceosome B/catalytic step 1 spliceosome, one of the forms of the spliceosome which has a well-formed active site but still cannot catalyze the branching reaction and is composed at least of 52 proteins, the U2, U5 and U6 snRNAs and the pre-mRNA. Recruited during early steps of activated spliceosome B maturation, it is probably one of the first proteins released from this complex as he matures to the spliceosome C complex. Component of the minor spliceosome, which splices U12-type introns.

Its subcellular location is the nucleus. Its function is as follows. As part of the spliceosome, plays a role in pre-mRNA splicing. Probable inactive PPIase with no peptidyl-prolyl cis-trans isomerase activity. As a component of the minor spliceosome, involved in the splicing of U12-type introns in pre-mRNAs. This chain is Spliceosome-associated protein CWC27 homolog, found in Homo sapiens (Human).